The primary structure comprises 492 residues: MSFVCGISGELTEDPVVSQVSGHIFDRRLIVKFIAENGTDPISHGELSEDQLVSLKSGGTGSAPRNVSGTSIPSLLKMLQDEWDTVMLNSFSLRQQLQIARQELSHSLYQHDAACRVISRLSKELTAAREALSTLKPHTSAKVDDDVSIDESEDQQGLSEAILAKLEEKSKSLTAERKQRGKNLPEGLAKTEELAELKQTASHTGIHSTGTPGITALDIKGNLSLTGGIDKTVVLYDYEKEQVMQTFKGHNKKINAVVLHPDNITAISASADSHIRVWSATDSSSKAIIDVHQAPVTDISLNASGDYILSASDDSYWAFSDIRSGKSLCKVSVEPGSQIAVHSIEFHPDGLIFGTGAADAVVKIWDLKNQTVAAAFPGHTAAVRSIAFSENGYYLATGSEDGEVKLWDLRKLKNLKTFANEEKQPINSLSFDMTGTFLGIGGQKVQVLHVKSWSEVVSLSDHSGPVTGVRFGENARSLVTCSLDKSLRVFSF.

Residues M1 to I72 form the U-box domain. 6 WD repeats span residues H207 to T246, G249 to I288, V291 to K330, G336 to A375, G378 to T417, and D461 to S491.

It belongs to the WD repeat PRP19 family. In terms of assembly, homotetramer. Component of the NTC complex (or PRP19-associated complex) which is associated with the spliceosome.

The protein localises to the nucleus. It localises to the nucleoplasm. It catalyses the reaction S-ubiquitinyl-[E2 ubiquitin-conjugating enzyme]-L-cysteine + [acceptor protein]-L-lysine = [E2 ubiquitin-conjugating enzyme]-L-cysteine + N(6)-ubiquitinyl-[acceptor protein]-L-lysine.. It participates in protein modification; protein ubiquitination. Probable ubiquitin-protein ligase which is mainly involved pre-mRNA splicing and DNA repair. Core component of the NTC/Nineteen complex which is part of the spliceosome and participates in its assembly, its remodeling and is required for its activity. Together with emb-4, necessary for interaction of rnp-4, a probable exon junction complex component, with mRNAs and spliceosomal snRNAs. Plays a role in nuclear retention of unspliced mRNAs. The protein is Pre-mRNA-processing factor 19 (prp-19) of Caenorhabditis elegans.